The primary structure comprises 417 residues: Inhibitor of growth protein 3 (417 aa).

Disordered stretches follow at residues Leu-126 to Lys-165, Ser-177 to Asn-198, and Gln-284 to Leu-320. Positions His-136–Ser-152 are enriched in basic residues. Over residues Ser-156–Lys-165 the composition is skewed to basic and acidic residues. The segment covering Ser-177–Cys-187 has biased composition (polar residues). Low complexity-rich tracts occupy residues Asn-189–Asn-198, Gln-284–Ser-294, and Asn-303–Leu-320. The PHD-type zinc finger occupies Pro-359–Ala-408. Zn(2+) contacts are provided by Cys-362, Cys-364, Cys-375, Cys-380, His-386, Cys-389, Cys-402, and Cys-405.

It belongs to the ING family. In terms of assembly, interacts with H3K4me3 and to a lesser extent with H3K4me2. Component of the NuA4 histone acetyltransferase complex.

It is found in the nucleus. Its function is as follows. Component of the NuA4 histone acetyltransferase (HAT) complex which is involved in transcriptional activation of select genes principally by acetylation of nucleosomal histone H4 and H2A. This modification may both alter nucleosome - DNA interactions and promote interaction of the modified histones with other proteins which positively regulate transcription. NuA4 may also play a direct role in DNA repair when directly recruited to sites of DNA damage. The polypeptide is Inhibitor of growth protein 3 (ing3) (Xenopus tropicalis (Western clawed frog)).